The primary structure comprises 62 residues: MENIKASTEQLCAEANIQRKKVSEVSKELLDFCEKNKTNDMLVSGPTDQHNPFQEKKSCSVL.

Residues 40 to 62 are disordered; the sequence is DMLVSGPTDQHNPFQEKKSCSVL. Positions 53 to 62 are enriched in basic and acidic residues; it reads FQEKKSCSVL. Cysteine methyl ester is present on cysteine 59. Cysteine 59 is lipidated: S-geranylgeranyl cysteine. Residues 60–62 constitute a propeptide, removed in mature form; the sequence is SVL.

It belongs to the G protein gamma family. G proteins are composed of 3 units, alpha, beta and gamma. Interacts with gpb-1 and gpb-2. As to expression, predominantly expressed in the central nervous system.

The protein localises to the cell membrane. Functionally, guanine nucleotide-binding proteins (G proteins) are involved as a modulator or transducer in various transmembrane signaling systems. The beta and gamma chains are required for the GTPase activity, for replacement of GDP by GTP, and for G protein-effector interaction. The protein is Guanine nucleotide-binding protein subunit gamma (gpc-1) of Caenorhabditis elegans.